Consider the following 497-residue polypeptide: Transcription termination/antitermination protein NusA (497 aa).

Residues Gly135–Ser200 form the S1 motif domain. The 71-residue stretch at Arg302–Ile372 folds into the KH domain. A run of 2 repeats spans residues Lys364 to Leu414 and Gly439 to Cys489. Residues Lys364 to Cys489 form a 2 X 51 AA approximate repeats region.

This sequence belongs to the NusA family. In terms of assembly, monomer. Binds directly to the core enzyme of the DNA-dependent RNA polymerase and to nascent RNA.

The protein resides in the cytoplasm. Its function is as follows. Participates in both transcription termination and antitermination. The polypeptide is Transcription termination/antitermination protein NusA (Buchnera aphidicola subsp. Baizongia pistaciae (strain Bp)).